The following is a 226-amino-acid chain: MNENLFASFITPVILGLPLVTLIVLFPSLLFPTSNRLVSNRFVTLQQWMLQLVSKQMMSIHNSKGQTWALMLMSLILFIGSTNLLGLLPHSFTPTTQLSMNLGMAIPLWAGAVITGFRNKTKASLAHFLPQGTPTPLIPMLVIIETISLFIQPVALAVRLTANITAGHLLIHLIGGATLALMSISTTTALITFTILILLTILEFAVAMIQAYVFTLLVSLYLHDNT.

The next 6 helical transmembrane spans lie at 6–26 (FASFITPVILGLPLVTLIVLF), 68–88 (WALMLMSLILFIGSTNLLGLL), 97–117 (QLSMNLGMAIPLWAGAVITGF), 138–158 (IPMLVIIETISLFIQPVALAV), 164–184 (ITAGHLLIHLIGGATLALMSI), and 189–209 (ALITFTILILLTILEFAVAMI).

This sequence belongs to the ATPase A chain family. In terms of assembly, component of the ATP synthase complex composed at least of ATP5F1A/subunit alpha, ATP5F1B/subunit beta, ATP5MC1/subunit c (homooctomer), MT-ATP6/subunit a, MT-ATP8/subunit 8, ATP5ME/subunit e, ATP5MF/subunit f, ATP5MG/subunit g, ATP5MK/subunit k, ATP5MJ/subunit j, ATP5F1C/subunit gamma, ATP5F1D/subunit delta, ATP5F1E/subunit epsilon, ATP5PF/subunit F6, ATP5PB/subunit b, ATP5PD/subunit d, ATP5PO/subunit OSCP. ATP synthase complex consists of a soluble F(1) head domain (subunits alpha(3) and beta(3)) - the catalytic core - and a membrane F(0) domain - the membrane proton channel (subunits c, a, 8, e, f, g, k and j). These two domains are linked by a central stalk (subunits gamma, delta, and epsilon) rotating inside the F1 region and a stationary peripheral stalk (subunits F6, b, d, and OSCP). Interacts with DNAJC30; interaction is direct.

Its subcellular location is the mitochondrion inner membrane. The catalysed reaction is H(+)(in) = H(+)(out). Subunit a, of the mitochondrial membrane ATP synthase complex (F(1)F(0) ATP synthase or Complex V) that produces ATP from ADP in the presence of a proton gradient across the membrane which is generated by electron transport complexes of the respiratory chain. ATP synthase complex consist of a soluble F(1) head domain - the catalytic core - and a membrane F(1) domain - the membrane proton channel. These two domains are linked by a central stalk rotating inside the F(1) region and a stationary peripheral stalk. During catalysis, ATP synthesis in the catalytic domain of F(1) is coupled via a rotary mechanism of the central stalk subunits to proton translocation. With the subunit c (ATP5MC1), forms the proton-conducting channel in the F(0) domain, that contains two crucial half-channels (inlet and outlet) that facilitate proton movement from the mitochondrial intermembrane space (IMS) into the matrix. Protons are taken up via the inlet half-channel and released through the outlet half-channel, following a Grotthuss mechanism. This chain is ATP synthase F(0) complex subunit a, found in Bos indicus (Zebu).